The primary structure comprises 64 residues: MFTLKKSLLLLFFLGTINLSLCEQERNAEEERRDEPDERNAEVEKRFFPIVGKLLFGLSGLLGK.

The signal sequence occupies residues 1 to 22; that stretch reads MFTLKKSLLLLFFLGTINLSLC. Positions 23–47 are excised as a propeptide; sequence EQERNAEEERRDEPDERNAEVEKRF. Leu62 carries the leucine amide modification.

In terms of tissue distribution, expressed by the skin glands.

It localises to the secreted. Its function is as follows. Antimicrobial peptide with activity against Gram-positive and Gram-negative bacteria and against fungi. Has been tested against S.aureus (MIC=1.25 ug/mL), B.pumilus (MIC=5.0 ug/mL), B.cereus (MIC=15.0 ug/mL), E.coli (MIC=1.25 ug/mL), B.dysenteriae (MIC=5.0 ug/mL), A.cacoaceticus (MIC=15.0 ug/mL), P.aeruginosa (MIC=5.0 ug/mL) and C.albicans (MIC=1.25 ug/mL). Also shows a weak hemolytic activity. This is Temporin-ALe from Amolops loloensis (Lolokou Sucker Frog).